The following is a 446-amino-acid chain: Enolase 1 (446 aa).

Substrate is bound by residues histidine 164 and glutamate 173. The active-site Proton donor is the glutamate 216. Mg(2+)-binding residues include aspartate 251, glutamate 302, and aspartate 329. Residues glutamate 302 and aspartate 329 each coordinate substrate. Residue lysine 354 is the Proton acceptor of the active site. Residues 381–384 (SHRS) and lysine 405 each bind substrate.

The protein belongs to the enolase family. In terms of assembly, homodimer. Mg(2+) is required as a cofactor.

It is found in the cytoplasm. The enzyme catalyses (2R)-2-phosphoglycerate = phosphoenolpyruvate + H2O. It functions in the pathway carbohydrate degradation; glycolysis; pyruvate from D-glyceraldehyde 3-phosphate: step 4/5. This is Enolase 1 (ENO1) from Zea mays (Maize).